Reading from the N-terminus, the 258-residue chain is Ribonuclease HII (258 aa).

The region spanning 71 to 258 (QLIAGIDEVG…PIKTMVNFKS (188 aa)) is the RNase H type-2 domain. Residues aspartate 77, glutamate 78, and aspartate 169 each coordinate a divalent metal cation.

This sequence belongs to the RNase HII family. Mn(2+) serves as cofactor. It depends on Mg(2+) as a cofactor.

The protein localises to the cytoplasm. The catalysed reaction is Endonucleolytic cleavage to 5'-phosphomonoester.. Its function is as follows. Endonuclease that specifically degrades the RNA of RNA-DNA hybrids. This Lactococcus lactis subsp. lactis (strain IL1403) (Streptococcus lactis) protein is Ribonuclease HII (rnhB).